A 412-amino-acid chain; its full sequence is Tyrosine--tRNA ligase 1 (412 aa).

Tyrosine 41 serves as a coordination point for L-tyrosine. Residues 46–55 (ATADSLHVGH) carry the 'HIGH' region motif. 2 residues coordinate L-tyrosine: tyrosine 174 and glutamine 178. A 'KMSKS' region motif is present at residues 234-238 (KMGKS). Residue lysine 237 participates in ATP binding. Residues 348–411 (LSLTDLLLEH…KKQHLHLRLE (64 aa)) form the S4 RNA-binding domain.

This sequence belongs to the class-I aminoacyl-tRNA synthetase family. TyrS type 1 subfamily. Homodimer.

The protein localises to the cytoplasm. It catalyses the reaction tRNA(Tyr) + L-tyrosine + ATP = L-tyrosyl-tRNA(Tyr) + AMP + diphosphate + H(+). Catalyzes the attachment of tyrosine to tRNA(Tyr) in a two-step reaction: tyrosine is first activated by ATP to form Tyr-AMP and then transferred to the acceptor end of tRNA(Tyr). The sequence is that of Tyrosine--tRNA ligase 1 from Pseudomonas aeruginosa (strain ATCC 15692 / DSM 22644 / CIP 104116 / JCM 14847 / LMG 12228 / 1C / PRS 101 / PAO1).